The chain runs to 108 residues: uncharacterized protein (108 aa).

N-linked (GlcNAc...) asparagine glycosylation occurs at N33.

N-glycosylated.

This is an uncharacterized protein from Saccharomyces cerevisiae (strain ATCC 204508 / S288c) (Baker's yeast).